Here is a 253-residue protein sequence, read N- to C-terminus: Pro-opiomelanocortin A (253 aa).

Residues methionine 1–glycine 21 form the signal peptide. Glutamine 22 carries the pyrrolidone carboxylic acid modification. 2 cysteine pairs are disulfide-bonded: cysteine 23–cysteine 45 and cysteine 29–cysteine 41. Serine 104 is subject to N-acetylserine; in Corticotropin. Valine 116 is subject to Valine amide. The segment at glutamine 228–glycine 253 is disordered. Position 252 is a glutamine amide; partial (glutamine 252).

This sequence belongs to the POMC family. Specific enzymatic cleavages at paired basic residues yield the different active peptides. In terms of processing, acetylation of beta-endorphin occurs in a tissue-specific manner. As to expression, C-terminal peptide 1 and C-terminal peptide 2 are detected in the anterior part of the nucleus lateralis tuberis of hypothalamus, in dorsal hypothalamus, thalamus, telencephalon, optic tectum and medulla oblongata (at protein level). Expressed in pituitary and hypothalamus of adult diploid animals, and hypothalamus of triploid and ovulated female trout.

The protein localises to the secreted. Functionally, stimulates the adrenal glands to release cortisol. Its function is as follows. Melanocyte-stimulating hormone alpha: Anorexigenic peptide. Increases the pigmentation of skin by increasing melanin production in melanocytes. In terms of biological role, melanocyte-stimulating hormone beta: Increases the pigmentation of skin by increasing melanin production in melanocytes. Beta-endorphin: Endogenous orexigenic opiate. Functionally, endogenous opiate. The polypeptide is Pro-opiomelanocortin A (pomca) (Oncorhynchus mykiss (Rainbow trout)).